The chain runs to 517 residues: Glucose-6-phosphate isomerase (517 aa).

The active-site Proton donor is the glutamate 345. Active-site residues include histidine 376 and lysine 490.

The protein belongs to the GPI family.

Its subcellular location is the cytoplasm. The enzyme catalyses alpha-D-glucose 6-phosphate = beta-D-fructose 6-phosphate. It functions in the pathway carbohydrate biosynthesis; gluconeogenesis. It participates in carbohydrate degradation; glycolysis; D-glyceraldehyde 3-phosphate and glycerone phosphate from D-glucose: step 2/4. Catalyzes the reversible isomerization of glucose-6-phosphate to fructose-6-phosphate. This Erythrobacter litoralis (strain HTCC2594) protein is Glucose-6-phosphate isomerase.